The primary structure comprises 136 residues: Large ribosomal subunit protein uL16c (136 aa).

The segment at 1-20 is disordered; sequence MLSPKRTKFRKQHRGRMKGK.

It belongs to the universal ribosomal protein uL16 family. In terms of assembly, part of the 50S ribosomal subunit.

It localises to the plastid. The protein resides in the chloroplast. The sequence is that of Large ribosomal subunit protein uL16c from Brachypodium distachyon (Purple false brome).